Reading from the N-terminus, the 94-residue chain is Large ribosomal subunit protein uL23 (94 aa).

The protein belongs to the universal ribosomal protein uL23 family. Part of the 50S ribosomal subunit. Contacts protein L29, and trigger factor when it is bound to the ribosome.

In terms of biological role, one of the early assembly proteins it binds 23S rRNA. One of the proteins that surrounds the polypeptide exit tunnel on the outside of the ribosome. Forms the main docking site for trigger factor binding to the ribosome. In Lysinibacillus sphaericus (strain C3-41), this protein is Large ribosomal subunit protein uL23.